The chain runs to 413 residues: Transposon Ty4-H Gag polyprotein (413 aa).

A coiled-coil region spans residues 39 to 115 (RKVSIKDEQV…IQLLETNENN (77 aa)). The disordered stretch occupies residues 380-413 (RQQQLKSSAKRTKVLEQDTKKVKQSVQQQKTGNY). Over residues 403–413 (QSVQQQKTGNY) the composition is skewed to low complexity.

Capsid protein (CA) is the structural component of the virus-like particle (VLP), forming the shell that encapsulates the retrotransposons dimeric RNA genome. In Saccharomyces cerevisiae (strain ATCC 204508 / S288c) (Baker's yeast), this protein is Transposon Ty4-H Gag polyprotein (TY4A-H).